Here is a 61-residue protein sequence, read N- to C-terminus: Metallothionein-1 (61 aa).

The residue at position 1 (Met-1) is an N-acetylmethionine. Residues 1 to 29 (MDPNCSCSTGGSCTCSSSCGCKNCKCTSC) are beta. A divalent metal cation contacts are provided by Cys-5, Cys-7, Cys-13, Cys-15, Cys-19, Cys-21, Cys-24, Cys-26, Cys-29, Cys-33, Cys-34, Cys-36, Cys-37, Cys-41, Cys-44, Cys-48, Cys-50, Cys-57, Cys-59, and Cys-60. Residues 30-61 (KKSCCSCCPVGCSKCAQGCVCKGASDKCTCCA) form an alpha region.

This sequence belongs to the metallothionein superfamily. Type 1 family.

In terms of biological role, metallothioneins have a high content of cysteine residues that bind various heavy metals; these proteins are transcriptionally regulated by both heavy metals and glucocorticoids. The sequence is that of Metallothionein-1 (Mt1) from Rattus norvegicus (Rat).